Here is a 358-residue protein sequence, read N- to C-terminus: Alanine racemase (358 aa).

Lys-34 serves as the catalytic Proton acceptor; specific for D-alanine. Position 34 is an N6-(pyridoxal phosphate)lysine (Lys-34). Substrate is bound at residue Arg-129. Tyr-254 serves as the catalytic Proton acceptor; specific for L-alanine. Met-302 serves as a coordination point for substrate.

It belongs to the alanine racemase family. Pyridoxal 5'-phosphate is required as a cofactor.

The catalysed reaction is L-alanine = D-alanine. It functions in the pathway amino-acid biosynthesis; D-alanine biosynthesis; D-alanine from L-alanine: step 1/1. In terms of biological role, catalyzes the interconversion of L-alanine and D-alanine. May also act on other amino acids. The polypeptide is Alanine racemase (alr) (Aliivibrio salmonicida (strain LFI1238) (Vibrio salmonicida (strain LFI1238))).